The chain runs to 171 residues: Alpha-amylase/trypsin inhibitor CMd (171 aa).

The signal sequence occupies residues 1-24; sequence MACKSSRSLLLLATVMVSVFAAAA.

Belongs to the protease inhibitor I6 (cereal trypsin/alpha-amylase inhibitor) family. In terms of assembly, heterotetramer of one CMa, one CMb and two CMd chains. In terms of processing, five disulfide bonds, which are essential for the inhibitor activity, are probably present. In terms of tissue distribution, endosperm.

Its subcellular location is the secreted. Functionally, part of a complex with inhibitory activity, but CMd is inactive as a separate subunit. This chain is Alpha-amylase/trypsin inhibitor CMd (IAT3), found in Hordeum vulgare (Barley).